Reading from the N-terminus, the 100-residue chain is UPF0251 protein VV2_0946 (100 aa).

It belongs to the UPF0251 family.

This chain is UPF0251 protein VV2_0946, found in Vibrio vulnificus (strain CMCP6).